A 506-amino-acid chain; its full sequence is Histidine ammonia-lyase (506 aa).

The 5-imidazolinone (Ala-Gly) cross-link spans 143 to 145 (ASG). Residue Ser144 is modified to 2,3-didehydroalanine (Ser).

It belongs to the PAL/histidase family. Post-translationally, contains an active site 4-methylidene-imidazol-5-one (MIO), which is formed autocatalytically by cyclization and dehydration of residues Ala-Ser-Gly.

It is found in the cytoplasm. The catalysed reaction is L-histidine = trans-urocanate + NH4(+). The protein operates within amino-acid degradation; L-histidine degradation into L-glutamate; N-formimidoyl-L-glutamate from L-histidine: step 1/3. The chain is Histidine ammonia-lyase from Citrobacter koseri (strain ATCC BAA-895 / CDC 4225-83 / SGSC4696).